Reading from the N-terminus, the 89-residue chain is Cell division topological specificity factor (89 aa).

The protein belongs to the MinE family.

Its function is as follows. Prevents the cell division inhibition by proteins MinC and MinD at internal division sites while permitting inhibition at polar sites. This ensures cell division at the proper site by restricting the formation of a division septum at the midpoint of the long axis of the cell. This Desulforudis audaxviator (strain MP104C) protein is Cell division topological specificity factor.